The sequence spans 381 residues: 40-kDa huntingtin-associated protein (381 aa).

A2 bears the N-acetylalanine mark. Residues 34-36 (KKR) carry the Nuclear localization signal motif. The tract at residues 213–260 (EHGGHPVQQPELPQQLPSVPQPSLPGPQPRPVLGSTLPLPLPPDHAPG) is disordered. Over residues 218-230 (PVQQPELPQQLPS) the composition is skewed to low complexity. Residues 231 to 242 (VPQPSLPGPQPR) are compositionally biased toward pro residues.

In terms of assembly, interacts with HTT (via C-terminus). Interacts with RAB5A. Found in a complex with F8A1/F8A2/F8A3, HTT and RAB5A; mediates the recruitment of HTT by RAB5A onto early endosomes.

It localises to the cytoplasm. It is found in the nucleus. The protein localises to the early endosome. Its subcellular location is the nuclear body. Functionally, RAB5A effector molecule that is involved in vesicular trafficking of early endosomes. Mediates the recruitment of HTT by RAB5A onto early endosomes. The HTT-F8A1/F8A2/F8A3-RAB5A complex stimulates early endosomal interaction with actin filaments and inhibits interaction with microtubules, leading to the reduction of endosome motility. This chain is 40-kDa huntingtin-associated protein (F8a1), found in Rattus norvegicus (Rat).